The primary structure comprises 618 residues: Neurosecretory protein VGF (618 aa).

The N-terminal stretch at 1–23 is a signal peptide; sequence MKSLRLPATVLFCLLLLIKGLGA. 3 disordered regions span residues 23–46, 86–201, and 219–262; these read AAPP…PVAG, VLLQ…LESP, and PERA…GEAL. Residues 26 to 37 are compositionally biased toward pro residues; it reads PGHPEAQPPPPS. Positions 180–195 are enriched in low complexity; sequence ETAAAETETRTHTLTR. Residues 301-332 adopt a coiled-coil conformation; the sequence is LAQVEAGRRQAEATRQAAAQEERLADLASDLL. The residue at position 310 (Gln310) is a Pyrrolidone carboxylic acid. Residues 342-603 form a disordered region; sequence RQRGLGGRGL…EAEERRLQEQ (262 aa). Over residues 356-378 the composition is skewed to basic and acidic residues; the sequence is GGGRETARQQEEAEQERRGGEER. Acidic residues predominate over residues 379-395; sequence VGEEDEEAAEAEAEAEE. The span at 416–434 shows a compositional bias: basic and acidic residues; the sequence is AEDKRSREETPGHRRKEAE. Phosphoserine is present on Ser421. Thr425 is modified (phosphothreonine). The span at 435-451 shows a compositional bias: acidic residues; that stretch reads GAEEGGAEDEDDDEEMD. The segment covering 490-500 has biased composition (pro residues); the sequence is PPEPVPPPRAA. A compositionally biased stretch (basic and acidic residues) spans 578-602; sequence HYPDREAQARRAQEEAEAEERRLQE.

In terms of processing, multiple peptides are derived from VGF, with activities in synaptic plasticity, antidepression, penile erection, autonomic activation, and increases in energy expenditure.

It is found in the secreted. It localises to the cytoplasmic vesicle. The protein resides in the secretory vesicle. In terms of biological role, secreted polyprotein that is packaged and proteolytically processed by prohormone convertases PCSK1 and PCSK2 in a cell-type-specific manner. VGF and peptides derived from its processing play many roles in neurogenesis and neuroplasticity associated with learning, memory, depression and chronic pain. Functionally, plays a role in the control of body fluid homeostasis by regulating vasopressin release. Suppresses presynaptic glutamatergic neurons connected to vasopressin neurons. Plays a role in the control of body fluid homeostasis by regulating vasopressin release. Activates GABAergic interneurons which are inhibitory neurons of the nervous system and thereby suppresses presynaptic glutamatergic neurons. Also stimulates feeding behavior in an orexin-dependent manner in the hypothalamus. Functions as a positive regulator for the activation of orexin neurons resulting in elevated gastric acid secretion and gastric emptying. This Bos taurus (Bovine) protein is Neurosecretory protein VGF.